Here is a 211-residue protein sequence, read N- to C-terminus: Large ribosomal subunit protein uL4 (211 aa).

The tract at residues 41-87 (QAHARQGTASTLTRSEVRGGGRKPYKQKGTGRARQGSIRTPLRPGGG) is disordered. Residues 60–71 (GGRKPYKQKGTG) are compositionally biased toward basic residues.

The protein belongs to the universal ribosomal protein uL4 family. Part of the 50S ribosomal subunit.

In terms of biological role, one of the primary rRNA binding proteins, this protein initially binds near the 5'-end of the 23S rRNA. It is important during the early stages of 50S assembly. It makes multiple contacts with different domains of the 23S rRNA in the assembled 50S subunit and ribosome. Forms part of the polypeptide exit tunnel. The chain is Large ribosomal subunit protein uL4 from Parasynechococcus marenigrum (strain WH8102).